The primary structure comprises 129 residues: Small ribosomal subunit protein uS11 (129 aa).

This sequence belongs to the universal ribosomal protein uS11 family. Part of the 30S ribosomal subunit. Interacts with proteins S7 and S18. Binds to IF-3.

Its function is as follows. Located on the platform of the 30S subunit, it bridges several disparate RNA helices of the 16S rRNA. Forms part of the Shine-Dalgarno cleft in the 70S ribosome. In Nitrosomonas europaea (strain ATCC 19718 / CIP 103999 / KCTC 2705 / NBRC 14298), this protein is Small ribosomal subunit protein uS11.